Here is a 207-residue protein sequence, read N- to C-terminus: 8-oxoguanine DNA glycosylase/AP lyase (207 aa).

Residues K128 and D146 contribute to the active site.

This sequence belongs to the type-2 OGG1 family.

It carries out the reaction 2'-deoxyribonucleotide-(2'-deoxyribose 5'-phosphate)-2'-deoxyribonucleotide-DNA = a 3'-end 2'-deoxyribonucleotide-(2,3-dehydro-2,3-deoxyribose 5'-phosphate)-DNA + a 5'-end 5'-phospho-2'-deoxyribonucleoside-DNA + H(+). In terms of biological role, catalyzes the excision of an oxidatively damaged form of guanine (7,8-dihydro-8-oxoguanine = 8-oxoG) from DNA. Also cleaves the DNA backbone at apurinic/apyrimidinic sites (AP sites). The chain is 8-oxoguanine DNA glycosylase/AP lyase from Saccharolobus islandicus (strain L.S.2.15 / Lassen #1) (Sulfolobus islandicus).